Consider the following 597-residue polypeptide: DNA polymerase III subunit gamma/tau (597 aa).

44-51 (GERGTGKT) is a binding site for ATP. 4 residues coordinate Zn(2+): Cys63, Cys72, Cys75, and Cys78.

It belongs to the DnaX/STICHEL family. In terms of assembly, DNA polymerase III contains a core (composed of alpha, epsilon and theta chains) that associates with a tau subunit. This core dimerizes to form the POLIII' complex. PolIII' associates with the gamma complex (composed of gamma, delta, delta', psi and chi chains) and with the beta chain to form the complete DNA polymerase III complex.

It catalyses the reaction DNA(n) + a 2'-deoxyribonucleoside 5'-triphosphate = DNA(n+1) + diphosphate. DNA polymerase III is a complex, multichain enzyme responsible for most of the replicative synthesis in bacteria. This DNA polymerase also exhibits 3' to 5' exonuclease activity. The protein is DNA polymerase III subunit gamma/tau (dnaX) of Mycoplasma genitalium (strain ATCC 33530 / DSM 19775 / NCTC 10195 / G37) (Mycoplasmoides genitalium).